We begin with the raw amino-acid sequence, 106 residues long: UPF0449 protein C19orf25 homolog (106 aa).

It belongs to the UPF0449 family.

The protein is UPF0449 protein C19orf25 homolog of Xenopus tropicalis (Western clawed frog).